The chain runs to 234 residues: ATP-dependent dethiobiotin synthetase BioD (234 aa).

12 to 17 contacts ATP; that stretch reads DVGKTF. Residue T16 coordinates Mg(2+). The active site involves K37. T41 is a substrate binding site. ATP-binding positions include D54 and 115–118; that span reads EGAG. Mg(2+) is bound by residues D54 and E115.

Belongs to the dethiobiotin synthetase family. Homodimer. It depends on Mg(2+) as a cofactor.

Its subcellular location is the cytoplasm. It catalyses the reaction (7R,8S)-7,8-diammoniononanoate + CO2 + ATP = (4R,5S)-dethiobiotin + ADP + phosphate + 3 H(+). It functions in the pathway cofactor biosynthesis; biotin biosynthesis; biotin from 7,8-diaminononanoate: step 1/2. In terms of biological role, catalyzes a mechanistically unusual reaction, the ATP-dependent insertion of CO2 between the N7 and N8 nitrogen atoms of 7,8-diaminopelargonic acid (DAPA, also called 7,8-diammoniononanoate) to form a ureido ring. The protein is ATP-dependent dethiobiotin synthetase BioD of Lysinibacillus sphaericus (Bacillus sphaericus).